A 174-amino-acid chain; its full sequence is Stigma-specific STIG1-like protein 4 (174 aa).

The N-terminal stretch at 1-25 (MMSIKLTLCALIFFLLNSLLHHVLG) is a signal peptide. The segment at 140-174 (PSSQPGKRHRRHKFHRPRPPPSPDSKLNYDDHDDE) is disordered. The segment covering 145-157 (GKRHRRHKFHRPR) has biased composition (basic residues).

It belongs to the STIG1 family.

It is found in the secreted. In terms of biological role, endosperm-specific cysteine-rich protein that acts downstream of BHLH95/ZOU to modify the interface between embryo and endosperm and mediate the separation of these two tissues during seed development. Necessary for the biogenesis of the embryo sheath, an extracuticular endosperm-derived structure at the surface of the embryo. Required for the separation of embryo and endosperm, and for normal progression of the embryo through the endosperm tissue. Required for the formation of a normal embryonic cuticle. This Arabidopsis thaliana (Mouse-ear cress) protein is Stigma-specific STIG1-like protein 4.